The following is a 171-amino-acid chain: Homeobox protein engrailed-1-B (171 aa).

Disordered regions lie at residues 1–41 (EDPG…NAAP) and 60–86 (YSDRPSSGPRTRKLKKKKSEKEDKRPR). Low complexity predominate over residues 15–29 (PDSDTPSDSSKGSDS). A DNA-binding region (homeobox) is located at residues 82–141 (DKRPRTAFTAEQLQRLKAEFQANRYITEQRRQTLAQELSLNESQIKIWFQNKRAKIKKAS).

This sequence belongs to the engrailed homeobox family.

The protein resides in the nucleus. In terms of biological role, required for proper formation of the apical ectodermal ridge and correct dorsal-ventral patterning in the limb. The protein is Homeobox protein engrailed-1-B (en1-b) of Xenopus laevis (African clawed frog).